We begin with the raw amino-acid sequence, 235 residues long: Pyridoxine 5'-phosphate synthase (235 aa).

Asn-6 contacts 3-amino-2-oxopropyl phosphate. 8-9 (DH) lines the 1-deoxy-D-xylulose 5-phosphate pocket. 3-amino-2-oxopropyl phosphate is bound at residue Arg-17. His-42 serves as the catalytic Proton acceptor. The 1-deoxy-D-xylulose 5-phosphate site is built by Arg-44 and His-49. Glu-69 (proton acceptor) is an active-site residue. Thr-99 is a binding site for 1-deoxy-D-xylulose 5-phosphate. Residue His-188 is the Proton donor of the active site. Residues Gly-189 and 210 to 211 (GH) contribute to the 3-amino-2-oxopropyl phosphate site.

It belongs to the PNP synthase family. Homooctamer; tetramer of dimers.

It is found in the cytoplasm. The enzyme catalyses 3-amino-2-oxopropyl phosphate + 1-deoxy-D-xylulose 5-phosphate = pyridoxine 5'-phosphate + phosphate + 2 H2O + H(+). The protein operates within cofactor biosynthesis; pyridoxine 5'-phosphate biosynthesis; pyridoxine 5'-phosphate from D-erythrose 4-phosphate: step 5/5. Catalyzes the complicated ring closure reaction between the two acyclic compounds 1-deoxy-D-xylulose-5-phosphate (DXP) and 3-amino-2-oxopropyl phosphate (1-amino-acetone-3-phosphate or AAP) to form pyridoxine 5'-phosphate (PNP) and inorganic phosphate. This chain is Pyridoxine 5'-phosphate synthase, found in Wolbachia sp. subsp. Drosophila simulans (strain wRi).